We begin with the raw amino-acid sequence, 178 residues long: Probable DNA-directed RNA polymerase subunit delta (178 aa).

Positions 14-81 (LSMIEVAHAI…GENTWGLRTW (68 aa)) constitute an HTH HARE-type domain. Acidic residues predominate over residues 120–143 (DDDVIDYDSDDPEDEEVEAEDTTS). The disordered stretch occupies residues 120–178 (DDDVIDYDSDDPEDEEVEAEDTTSDDAPAFEDLSNDDDTDVLPDGIEGQLSELNEDDEN).

This sequence belongs to the RpoE family. RNAP is composed of a core of 2 alpha, a beta and a beta' subunits. The core is associated with a delta subunit and one of several sigma factors.

Participates in both the initiation and recycling phases of transcription. In the presence of the delta subunit, RNAP displays an increased specificity of transcription, a decreased affinity for nucleic acids, and an increased efficiency of RNA synthesis because of enhanced recycling. The polypeptide is Probable DNA-directed RNA polymerase subunit delta (Pediococcus pentosaceus (strain ATCC 25745 / CCUG 21536 / LMG 10740 / 183-1w)).